Here is a 355-residue protein sequence, read N- to C-terminus: Methyltransferase FUS9 (355 aa).

Residues Tyr-18, Asn-63, Asp-86, Ser-123, and Phe-124 each contribute to the S-adenosyl-L-homocysteine site. A Mg(2+)-binding site is contributed by Phe-231.

This sequence belongs to the methyltransferase superfamily. Type-7 methyltransferase family. Requires Mg(2+) as cofactor.

It participates in mycotoxin biosynthesis. In terms of biological role, methyltransferase; part of the gene cluster that mediates the biosynthesis of the mycotoxin fusarin C. Within the cluster, FUS1, FUS2, FUS8 and FUS9 are sufficient for fusarin production. The roles of the other FUS members are yet undetermined. The fusarin C synthetase FUS1 is responsible for the condensation of one acetyl-coenzyme A (CoA) unit with six malonyl-CoA units and the amide linkage of the arising heptaketide and homoserine, subsequently releasing the first intermediate, prefusarin, as an alcohol with an open ring structure. The cytochrome P450 monooxygenase FUS8 participates in multiple oxidation processes at carbon C-20 and is able to use the FUS1 product as substrate, resulting in formation of 20-hydroxy-prefusarin. This reaction seems to be essential before the 2-pyrrolidone ring closure can be catalyzed by FUS2, generating 20-hydroxy-fusarin. FUS8 is able to further oxidizes carbon C-20 after ring closure, resulting in the formation of carboxy-fusarin C. As the last step, FUS9 methylates the hydroxyl group at C-21 to generate fusarin C. Fusarin C can then rearrange to epi-fusarin C, the (z)-isomers, and fusarin A and fusarin D. In Gibberella moniliformis (strain M3125 / FGSC 7600) (Maize ear and stalk rot fungus), this protein is Methyltransferase FUS9.